The sequence spans 231 residues: NADH-ubiquinone oxidoreductase chain 4 (231 aa).

7 consecutive transmembrane segments (helical) span residues 1-21 (PIAG…YGII), 34-54 (LFIP…LTCL), 61-80 (SLIA…AVII), 84-106 (WGLS…LFCL), 118-138 (ILIL…WWLL), 156-176 (LLIV…LGLS), and 211-231 (LLMI…ELVI).

This sequence belongs to the complex I subunit 4 family.

It is found in the mitochondrion membrane. The enzyme catalyses a ubiquinone + NADH + 5 H(+)(in) = a ubiquinol + NAD(+) + 4 H(+)(out). Its function is as follows. Core subunit of the mitochondrial membrane respiratory chain NADH dehydrogenase (Complex I) that is believed to belong to the minimal assembly required for catalysis. Complex I functions in the transfer of electrons from NADH to the respiratory chain. The immediate electron acceptor for the enzyme is believed to be ubiquinone. This chain is NADH-ubiquinone oxidoreductase chain 4 (MT-ND4), found in Hypnale hypnale (Merrem's hump-nosed viper).